The sequence spans 221 residues: Stromal cell-derived factor 2-like protein 1 (221 aa).

An N-terminal signal peptide occupies residues 1–28 (MWGASRGRVAGPTLLGLLLALSVRSGGA). 3 consecutive MIR domains span residues 33–87 (AGLV…IRGG), 95–150 (GLPV…VRCS), and 151–205 (GQHW…AMEG). S215 carries the phosphoserine modification. Residues 218–221 (HDEL) carry the Prevents secretion from ER motif.

As to expression, ubiquitously expressed with high expression in the testis, ovary, uterus, and low expression in heart and skeletal muscle.

It is found in the endoplasmic reticulum lumen. The sequence is that of Stromal cell-derived factor 2-like protein 1 (Sdf2l1) from Mus musculus (Mouse).